The sequence spans 372 residues: Cytochrome b (372 aa).

Transmembrane regions (helical) follow at residues 25 to 45, 69 to 90, 105 to 125, and 170 to 190; these read FGSM…FLAI, WIMQ…YIHI, WLSG…GYVL, and FFAL…IHII. Residues His-75 and His-89 each coordinate heme b. Heme b-binding residues include His-174 and His-188. His-193 serves as a coordination point for a ubiquinone. 4 helical membrane-spanning segments follow: residues 218-238, 280-300, 312-332, and 339-358; these read YKDM…LSFS, LGGT…PFTH, LSQA…WTAS, and FVTI…ITIP.

This sequence belongs to the cytochrome b family. In terms of assembly, the cytochrome bc1 complex contains 3 respiratory subunits (MT-CYB, CYC1 and UQCRFS1), 2 core proteins (UQCRC1 and UQCRC2) and probably 6 low-molecular weight proteins. Requires heme b as cofactor.

The protein localises to the mitochondrion inner membrane. Component of the ubiquinol-cytochrome c reductase complex (complex III or cytochrome b-c1 complex) that is part of the mitochondrial respiratory chain. The b-c1 complex mediates electron transfer from ubiquinol to cytochrome c. Contributes to the generation of a proton gradient across the mitochondrial membrane that is then used for ATP synthesis. This is Cytochrome b (MT-CYB) from Naja multifasciata (Burrowing cobra).